The primary structure comprises 103 residues: MSIQAIESVLQLMQAQALQAASIAKPLPLQSGFASQLMAAVGKINQTRLNATKRAQDFTLGVPGVELNDVMVEMQKSSIALQIGVQAKNKLTASYQEIMNMQV.

Belongs to the FliE family.

It is found in the bacterial flagellum basal body. This is Flagellar hook-basal body complex protein FliE from Photorhabdus laumondii subsp. laumondii (strain DSM 15139 / CIP 105565 / TT01) (Photorhabdus luminescens subsp. laumondii).